Here is a 447-residue protein sequence, read N- to C-terminus: Exodeoxyribonuclease 7 large subunit (447 aa).

Belongs to the XseA family. As to quaternary structure, heterooligomer composed of large and small subunits.

It is found in the cytoplasm. It catalyses the reaction Exonucleolytic cleavage in either 5'- to 3'- or 3'- to 5'-direction to yield nucleoside 5'-phosphates.. Its function is as follows. Bidirectionally degrades single-stranded DNA into large acid-insoluble oligonucleotides, which are then degraded further into small acid-soluble oligonucleotides. This Lactobacillus helveticus (strain DPC 4571) protein is Exodeoxyribonuclease 7 large subunit.